A 774-amino-acid polypeptide reads, in one-letter code: Lon protease 1 (774 aa).

Residues 9 to 202 form the Lon N-terminal domain; it reads IPLLPLRGLL…KVIDFINNEK (194 aa). 354 to 361 contacts ATP; the sequence is GPPGVGKT. The region spanning 590–771 is the Lon proteolytic domain; that stretch reads EDQVGVVTGL…DEVLEHALVG (182 aa). Active-site residues include S677 and K720.

Belongs to the peptidase S16 family. In terms of assembly, homohexamer. Organized in a ring with a central cavity. Exists as a mixture of small oligomeric species in solution.

The protein localises to the cytoplasm. The enzyme catalyses Hydrolysis of proteins in presence of ATP.. Its function is as follows. ATP-dependent serine protease that mediates the selective degradation of mutant and abnormal proteins as well as certain short-lived regulatory proteins. Required for cellular homeostasis and for survival from DNA damage and developmental changes induced by stress. Degrades polypeptides processively to yield small peptide fragments that are 5 to 10 amino acids long. Binds to DNA in a double-stranded, site-specific manner. Has been implicated in preventing sigma(G) activity under non-sporulation conditions. The chain is Lon protease 1 from Bacillus subtilis (strain 168).